Consider the following 521-residue polypeptide: Vang-like protein 2 (521 aa).

The interval methionine 1–histidine 81 is disordered. The Cytoplasmic segment spans residues methionine 1–glycine 108. The segment covering glycine 15–lysine 33 has biased composition (basic residues). The span at glutamate 57 to asparagine 67 shows a compositional bias: basic and acidic residues. Residues glycine 69–histidine 81 are compositionally biased toward low complexity. The chain crosses the membrane as a helical span at residues valine 109–leucine 129. At proline 130–glycine 147 the chain is on the extracellular side. The chain crosses the membrane as a helical span at residues leucine 148–phenylalanine 168. Residues arginine 169–valine 178 lie on the Cytoplasmic side of the membrane. Residues phenylalanine 179–phenylalanine 199 form a helical membrane-spanning segment. Topologically, residues tyrosine 200–tyrosine 218 are extracellular. A helical membrane pass occupies residues alanine 219–leucine 239. The Cytoplasmic segment spans residues arginine 240–valine 521. The PDZ-binding motif lies at glutamate 518–valine 521.

Belongs to the Vang family. Interacts with dvl/dsh. Interacts with prickle3.

It is found in the cell membrane. Has a role in non-canonical Wnt/planar cell polarity (PCP) signaling; can recruit dvl/dsh and prickle from the cytoplasm to the plasma membrane. Acts in a PCP complex to regulate the polarized assembly of fibronectrin on the surface of the mesoderm during gastrulation. Regulates convergent extension in both dorsal mesoderm and neural tissue without affecting cell fate. Regulates neural fold closure during neurulation. May be required for cell surface localization of fzd3 and fzd6 in the inner ear. This chain is Vang-like protein 2, found in Xenopus tropicalis (Western clawed frog).